We begin with the raw amino-acid sequence, 483 residues long: PRAME family member 12 (483 aa).

The stretch at 97 to 122 (RWKLQVLDLRNVDENFWGIWSGASAL) is one LRR 1; degenerate repeat. The stretch at 177–201 (HVCCKELQIFGIAIHRIIEVLNTVE) is one LRR 2; degenerate repeat. An LRR 3; degenerate repeat occupies 202 to 228 (LDCIQEVEVCCPWELSILIRFAPYLGQ). The stretch at 229 to 264 (MRNLRKLVLFNIHVSACIPLDRKEQFVIQFTSQFLK) is one LRR 4; degenerate repeat. 5 LRR repeats span residues 265–290 (LDYF…LRCL), 291–322 (QAPL…RQLK), 323–341 (ELDL…PLSV), 347–374 (EATL…ALSR), and 375–399 (CSQL…LLRH).

This sequence belongs to the PRAME family.

This Homo sapiens (Human) protein is PRAME family member 12.